The sequence spans 143 residues: MANAADFANALMQIVLANFELLTNAFSLLLNNSVDVAEVWNVSIHAAGFGYWFIKPFVGDGGALDVASKNVSAMKNISYAINYIGGNAETIFGNETGQKGLSAVMSHFVGLIDDEFALKVWNLAKSGVEVAMRMLENINSTLR.

This is an uncharacterized protein from Archaeoglobus fulgidus (strain ATCC 49558 / DSM 4304 / JCM 9628 / NBRC 100126 / VC-16).